The primary structure comprises 417 residues: L-rhamnose isomerase (417 aa).

Mn(2+) contacts are provided by His261, Asp293, and Asp295.

This sequence belongs to the rhamnose isomerase family. Mn(2+) is required as a cofactor.

It is found in the cytoplasm. The enzyme catalyses L-rhamnopyranose = L-rhamnulose. It functions in the pathway carbohydrate degradation; L-rhamnose degradation; glycerone phosphate from L-rhamnose: step 1/3. Its function is as follows. Catalyzes the interconversion of L-rhamnose and L-rhamnulose. The chain is L-rhamnose isomerase from Oceanobacillus iheyensis (strain DSM 14371 / CIP 107618 / JCM 11309 / KCTC 3954 / HTE831).